The primary structure comprises 552 residues: Lysine--tRNA ligase (552 aa).

A 'HIGH' region motif is present at residues 71–79 (PSGLPHLGT). The 'KMSKS' region motif lies at 319–323 (KISKS). Lysine 322 lines the ATP pocket.

It belongs to the class-I aminoacyl-tRNA synthetase family.

The protein localises to the cytoplasm. It carries out the reaction tRNA(Lys) + L-lysine + ATP = L-lysyl-tRNA(Lys) + AMP + diphosphate. In Caulobacter sp. (strain K31), this protein is Lysine--tRNA ligase.